A 620-amino-acid chain; its full sequence is DNA mismatch repair protein MutL (620 aa).

The segment at 332-402 (SELGLEAQPE…YRTPLRPATH (71 aa)) is disordered. Low complexity predominate over residues 352–365 (SNSTNSNVSSTSYS). The span at 378–394 (PLTTTATSYNQGQSSYR) shows a compositional bias: polar residues.

Belongs to the DNA mismatch repair MutL/HexB family.

Its function is as follows. This protein is involved in the repair of mismatches in DNA. It is required for dam-dependent methyl-directed DNA mismatch repair. May act as a 'molecular matchmaker', a protein that promotes the formation of a stable complex between two or more DNA-binding proteins in an ATP-dependent manner without itself being part of a final effector complex. The polypeptide is DNA mismatch repair protein MutL (Shewanella piezotolerans (strain WP3 / JCM 13877)).